Here is a 354-residue protein sequence, read N- to C-terminus: MTELKNDRYLRALLRQPVDVTPVWMMRQAGRYLPEYKATRAQAGDFMSLCKNAELACEVTLQPLRRYPLDAAILFSDILTVPDAMGLGLYFEAGEGPRFTSPVTCKADVDKLPIPDPEDELGYVMNAVRTIRRELKGEVPLIGFSGSPWTLATYMVEGGSSKAFTVIKKMMYADPQALHALLDKLAKSVTLYLNAQIKAGAQAVMIFDTWGGVLTGRDYQQFSLYYMHKIVDGLLRENDGRRVPVTLFTKGGGQWLEAMAETGCDALGLDWTTDIADARRRVGNKVALQGNMDPSMLYAPPARIEEEVATILAGFGHGEGHVFNLGHGIHQDVLPEHAGVFVEAVHRLSEQYHR.

Substrate is bound by residues Arg-27 to Arg-31, Asp-77, Tyr-154, Thr-209, and His-327.

It belongs to the uroporphyrinogen decarboxylase family. Homodimer.

The protein resides in the cytoplasm. It carries out the reaction uroporphyrinogen III + 4 H(+) = coproporphyrinogen III + 4 CO2. Its pathway is porphyrin-containing compound metabolism; protoporphyrin-IX biosynthesis; coproporphyrinogen-III from 5-aminolevulinate: step 4/4. Functionally, catalyzes the decarboxylation of four acetate groups of uroporphyrinogen-III to yield coproporphyrinogen-III. The chain is Uroporphyrinogen decarboxylase from Escherichia coli O6:K15:H31 (strain 536 / UPEC).